Consider the following 329-residue polypeptide: ADP-L-glycero-D-manno-heptose-6-epimerase (329 aa).

NADP(+) is bound by residues 10-11 (FI), 31-32 (DD), K38, K53, 74-78 (QGACS), and N91. Y138 serves as the catalytic Proton acceptor. NADP(+) is bound at residue K142. A substrate-binding site is contributed by N167. NADP(+) contacts are provided by V168 and K176. K176 acts as the Proton acceptor in catalysis. Residues R178, H185, 199-202 (FAGW), R212, and Y291 each bind substrate.

It belongs to the NAD(P)-dependent epimerase/dehydratase family. HldD subfamily. In terms of assembly, homopentamer. NADP(+) is required as a cofactor.

It carries out the reaction ADP-D-glycero-beta-D-manno-heptose = ADP-L-glycero-beta-D-manno-heptose. It functions in the pathway nucleotide-sugar biosynthesis; ADP-L-glycero-beta-D-manno-heptose biosynthesis; ADP-L-glycero-beta-D-manno-heptose from D-glycero-beta-D-manno-heptose 7-phosphate: step 4/4. The protein operates within bacterial outer membrane biogenesis; LPS core biosynthesis. Functionally, catalyzes the interconversion between ADP-D-glycero-beta-D-manno-heptose and ADP-L-glycero-beta-D-manno-heptose via an epimerization at carbon 6 of the heptose. This chain is ADP-L-glycero-D-manno-heptose-6-epimerase, found in Bordetella pertussis (strain Tohama I / ATCC BAA-589 / NCTC 13251).